We begin with the raw amino-acid sequence, 149 residues long: Large ribosomal subunit protein bL20m (149 aa).

Residues 1–9 (MVFLTAQLW) constitute a mitochondrion transit peptide.

This sequence belongs to the bacterial ribosomal protein bL20 family. As to quaternary structure, component of the mitochondrial large ribosomal subunit (mt-LSU). Mature mammalian 55S mitochondrial ribosomes consist of a small (28S) and a large (39S) subunit. The 28S small subunit contains a 12S ribosomal RNA (12S mt-rRNA) and 30 different proteins. The 39S large subunit contains a 16S rRNA (16S mt-rRNA), a copy of mitochondrial valine transfer RNA (mt-tRNA(Val)), which plays an integral structural role, and 52 different proteins. Interacts with OXA1L.

Its subcellular location is the mitochondrion. This chain is Large ribosomal subunit protein bL20m (MRPL20), found in Homo sapiens (Human).